The following is a 219-amino-acid chain: Ribonuclease T (219 aa).

The region spanning 20–194 is the Exonuclease domain; that stretch reads VVIDIETAGF…YDSLQTANLF (175 aa). Asp23, Glu25, His181, and Asp186 together coordinate Mg(2+). Residue His181 is the Proton donor/acceptor of the active site.

This sequence belongs to the RNase T family. In terms of assembly, homodimer. Requires Mg(2+) as cofactor.

Functionally, trims short 3' overhangs of a variety of RNA species, leaving a one or two nucleotide 3' overhang. Responsible for the end-turnover of tRNA: specifically removes the terminal AMP residue from uncharged tRNA (tRNA-C-C-A). Also appears to be involved in tRNA biosynthesis. In Buchnera aphidicola subsp. Schizaphis graminum (strain Sg), this protein is Ribonuclease T.